The chain runs to 197 residues: Adenylate kinase isoenzyme 6 homolog FAP7 (197 aa).

ATP-binding residues include glycine 17, glycine 19, lysine 20, serine 21, and serine 22. The interval 38-61 (NISDFAKDNDCFEGYDEGRKSHIV) is NMPbind. The interval 113–123 (ARGYHDSKIEE) is LID. Arginine 114 lines the ATP pocket. Residues 176–197 (PDGVTNEYQGPRSDDEDDEDSE) are disordered. Tyrosine 183 bears the Phosphotyrosine mark. Residues serine 188 and serine 196 each carry the phosphoserine modification.

It belongs to the adenylate kinase family. AK6 subfamily. In terms of assembly, interacts with small ribosomal subunit protein uS11B/RPS14B. Not a structural component of 43S pre-ribosomes, but transiently interacts with them by binding to uS11/RPS14.

It localises to the cytoplasm. The protein resides in the nucleus. The enzyme catalyses AMP + ATP = 2 ADP. The catalysed reaction is ATP + H2O = ADP + phosphate + H(+). In terms of biological role, broad-specificity nucleoside monophosphate (NMP) kinase that catalyzes the reversible transfer of the terminal phosphate group between nucleoside triphosphates and monophosphates. Also has ATPase activity. Involved in the late cytoplasmic maturation steps of the 40S ribosomal particles, specifically 18S rRNA maturation. Required for cleavage of the 20S pre-rRNA at site D in the cytoplasm. While NMP activity is not required for ribosome maturation, ATPase activity is. Associates transiently with small ribosomal subunit protein uS11. ATP hydrolysis breaks the interaction with uS11. May temporarily remove uS11 from the ribosome to enable a conformational change of the ribosomal RNA that is needed for the final maturation step of the small ribosomal subunit. Promotes formation of the rotated state in 80S-like ribosomes, a key intermediate in translocation, thereby releasing the essential assembly factor DIM1 from pre-40S subunits. Its NMP activity may have a role in nuclear energy homeostasis. Involved in oxidative stress response. Required for POS9-dependent target gene transcription upon oxidative stress. This chain is Adenylate kinase isoenzyme 6 homolog FAP7, found in Saccharomyces cerevisiae (strain ATCC 204508 / S288c) (Baker's yeast).